The sequence spans 766 residues: Dipeptidyl peptidase 4 (766 aa).

Residues 1–6 are Cytoplasmic-facing; the sequence is MKTPWK. Residues 7 to 28 form a helical; Signal-anchor for type II membrane protein membrane-spanning segment; it reads VLLGLLGAAALVTIITVPVVLL. Topologically, residues 29–766 are extracellular; it reads NKGTDDATAD…HFIKQCFSLP (738 aa). Residues Asn85, Asn92, Asn150, Asn219, Asn229, Asn281, and Asn321 are each glycosylated (N-linked (GlcNAc...) asparagine). 4 disulfide bridges follow: Cys328–Cys339, Cys385–Cys394, Cys444–Cys447, and Cys454–Cys472. The N-linked (GlcNAc...) asparagine glycan is linked to Asn520. The active-site Charge relay system is Ser630. Cys649 and Cys762 are disulfide-bonded. A glycan (N-linked (GlcNAc...) asparagine) is linked at Asn685. Catalysis depends on charge relay system residues Asp708 and His740.

Belongs to the peptidase S9B family. DPPIV subfamily. In terms of assembly, monomer. Homodimer. Heterodimer with Seprase (FAP). Requires homodimerization for optimal dipeptidyl peptidase activity and T-cell costimulation. Found in a membrane raft complex, at least composed of BCL10, CARD11, DPP4 and IKBKB. Associates with collagen. Interacts with PTPRC; the interaction is enhanced in an interleukin-12-dependent manner in activated lymphocytes. Interacts (via extracellular domain) with ADA; does not inhibit its dipeptidyl peptidase activity. Interacts with CAV1 (via the N-terminus); the interaction is direct. Interacts (via cytoplasmic tail) with CARD11 (via PDZ domain); its homodimerization is necessary for interaction with CARD11. Interacts with IGF2R; the interaction is direct. Interacts with GPC3. Interacts with human coronavirus-EMC spike protein and acts as a receptor for this virus. As to quaternary structure, (Microbial infection) Interacts with MERS coronavirus/MERS-CoV spike protein. The soluble form (Dipeptidyl peptidase 4 soluble form also named SDPP) derives from the membrane form (Dipeptidyl peptidase 4 membrane form also named MDPP) by proteolytic processing. Post-translationally, N- and O-Glycosylated. In terms of processing, phosphorylated. Mannose 6-phosphate residues in the carbohydrate moiety are necessary for interaction with IGF2R in activated T-cells. Mannose 6-phosphorylation is induced during T-cell activation. In terms of tissue distribution, expressed specifically in lymphatic vessels but not in blood vessels in the skin, small intestine, esophagus, ovary, breast and prostate glands. Not detected in lymphatic vessels in the lung, kidney, uterus, liver and stomach (at protein level). Expressed in the poorly differentiated crypt cells of the small intestine as well as in the mature villous cells. Expressed at very low levels in the colon.

It is found in the secreted. The protein resides in the cell membrane. The protein localises to the apical cell membrane. It localises to the cell projection. Its subcellular location is the invadopodium membrane. It is found in the lamellipodium membrane. The protein resides in the cell junction. The protein localises to the membrane raft. It carries out the reaction Release of an N-terminal dipeptide, Xaa-Yaa-|-Zaa-, from a polypeptide, preferentially when Yaa is Pro, provided Zaa is neither Pro nor hydroxyproline.. With respect to regulation, inhibited by GPC3 and diprotin A. In terms of biological role, cell surface glycoprotein receptor involved in the costimulatory signal essential for T-cell receptor (TCR)-mediated T-cell activation. Acts as a positive regulator of T-cell coactivation, by binding at least ADA, CAV1, IGF2R, and PTPRC. Its binding to CAV1 and CARD11 induces T-cell proliferation and NF-kappa-B activation in a T-cell receptor/CD3-dependent manner. Its interaction with ADA also regulates lymphocyte-epithelial cell adhesion. In association with FAP is involved in the pericellular proteolysis of the extracellular matrix (ECM), the migration and invasion of endothelial cells into the ECM. May be involved in the promotion of lymphatic endothelial cells adhesion, migration and tube formation. When overexpressed, enhanced cell proliferation, a process inhibited by GPC3. Also acts as a serine exopeptidase with a dipeptidyl peptidase activity that regulates various physiological processes by cleaving peptides in the circulation, including many chemokines, mitogenic growth factors, neuropeptides and peptide hormones such as brain natriuretic peptide 32. Removes N-terminal dipeptides sequentially from polypeptides having unsubstituted N-termini provided that the penultimate residue is proline. Its function is as follows. (Microbial infection) Acts as a receptor for human coronavirus MERS-CoV-2. The polypeptide is Dipeptidyl peptidase 4 (Homo sapiens (Human)).